We begin with the raw amino-acid sequence, 235 residues long: MSKNSKAYREAAEKVDREKLYTPLEATKLAKETSSKKYDATVEVAMRLGVDPRKADQMVRGTVNLPHGTGKTARVIVFAVGDKAEAAAAAGADVVGSDDLIERIQGGWVDFDAAIATPDQMAKVGRIARVLGPRGLMPNPKTGTVTPDVAKAVTDIKGGKINFRVDKHSNLHLIIGKASFDAEKLTENYGAVLDEILRAKPSSAKGRYLKKVVVSTTTGPGIQVDPGVTRNFLEA.

This sequence belongs to the universal ribosomal protein uL1 family. In terms of assembly, part of the 50S ribosomal subunit.

Functionally, binds directly to 23S rRNA. The L1 stalk is quite mobile in the ribosome, and is involved in E site tRNA release. In terms of biological role, protein L1 is also a translational repressor protein, it controls the translation of the L11 operon by binding to its mRNA. The polypeptide is Large ribosomal subunit protein uL1 (Mycobacteroides abscessus (strain ATCC 19977 / DSM 44196 / CCUG 20993 / CIP 104536 / JCM 13569 / NCTC 13031 / TMC 1543 / L948) (Mycobacterium abscessus)).